The following is a 677-amino-acid chain: Penicillin-binding protein activator LpoA (677 aa).

Positions 1–26 are cleaved as a signal peptide; the sequence is MLPSKIVRHKAGRFVPVLLAGLILAA. Cys-27 carries the N-palmitoyl cysteine lipid modification. A lipid anchor (S-diacylglycerol cysteine) is attached at Cys-27. Residues 309–359 are disordered; the sequence is QPADANAVVSPSANPAAAQQSGTAQQPATTQQQPQQQPAAEPASNAQVKVY. The segment covering 313 to 355 has biased composition (low complexity); that stretch reads ANAVVSPSANPAAAQQSGTAQQPATTQQQPQQQPAAEPASNAQ.

This sequence belongs to the LpoA family. As to quaternary structure, interacts with PBP1a.

It is found in the cell outer membrane. Regulator of peptidoglycan synthesis that is essential for the function of penicillin-binding protein 1A (PBP1a). The polypeptide is Penicillin-binding protein activator LpoA (Pantoea ananatis (strain LMG 20103)).